We begin with the raw amino-acid sequence, 153 residues long: MADWFSSPLKTCTHVCDFPSLAGDPQQEIMCCDSMKNKLQDSRKVLLVSCSVSFNGSFYGGNRNVRGQLQISMVEDDGVCRPIGYVPIGGYLYHNDYGYYEGTRTFNLDLESQYLKKDEDYNRKFLVSILNENGLDSQCDLKVFIVHSIRIKV.

This sequence belongs to the nanoviridae nuclear shuttle protein family.

It is found in the host nucleus. The protein resides in the host cytoplasm. Putative nuclear shuttle protein. This chain is Putative nuclear shuttle protein (DNA-N), found in Faba bean necrotic yellows virus (isolate Syrian SV292-88) (FBNYV).